A 638-amino-acid chain; its full sequence is MSSTDQGTNPADTDDLTPTTLSLAGDFPKATEEQWEREVEKVLNRGRPPEKQLTFAECLKRLTVHTVDGIDIVPMYRPKDAPKKLGYPGVAPFTRGTTVRNGDMDAWDVRALHEDPDEKFTRKAILEGLERGVTSLLLRVDPDAIAPEHLDEVLSDVLLEMTKVEVFSRYDQGAAAEALVSVYERSDKPAKDLALNLGLDPIAFAALQGTEPDLTVLGDWVRRLAKFSPDSRAVTIDANIYHNAGAGDVAELAWALATGAEYVRALVEQGFTATEAFDTINFRVTATHDQFLTIARLRALREAWARIGEVFGVDEDKRGARQNAITSWRDVTREDPYVNILRGSIATFSASVGGAESITTLPFTQALGLPEDDFPLRIARNTGIVLAEEVNIGRVNDPAGGSYYVESLTRSLADAAWKEFQEVEKLGGMSKAVMTEHVTKVLDACNAERAKRLANRKQPITAVSEFPMIGARSIETKPFPAAPARKGLAWHRDSEVFEQLMDRSTSVSERPKVFLACLGTRRDFGGREGFSSPVWHIAGIDTPQVEGGTTAEIVEAFKKSGAQVADLCSSAKVYAQQGLEVAKALKAAGAKALYLSGAFKEFGDDAAEAEKLIDGRLFMGMDVVDTLSSTLDILGVAK.

A compositionally biased stretch (polar residues) spans 1–11 (MSSTDQGTNPA). The disordered stretch occupies residues 1–34 (MSSTDQGTNPADTDDLTPTTLSLAGDFPKATEEQ).

It belongs to the methylmalonyl-CoA mutase family. In terms of assembly, heterodimer of an alpha and a beta chain. It depends on adenosylcob(III)alamin as a cofactor.

It carries out the reaction (R)-methylmalonyl-CoA = succinyl-CoA. The protein operates within metabolic intermediate metabolism; propanoyl-CoA degradation; succinyl-CoA from propanoyl-CoA: step 3/3. In terms of biological role, catalyzes the isomerization of succinyl-CoA to methylmalonyl-CoA during synthesis of propionate from tricarboxylic acid-cycle intermediates. The protein is Methylmalonyl-CoA mutase small subunit (mutA) of Propionibacterium freudenreichii subsp. shermanii.